The sequence spans 285 residues: Phosphatidylserine decarboxylase proenzyme (285 aa).

Active-site charge relay system; for autoendoproteolytic cleavage activity residues include aspartate 89, histidine 146, and serine 252. Serine 252 (schiff-base intermediate with substrate; via pyruvic acid; for decarboxylase activity) is an active-site residue. Serine 252 is modified (pyruvic acid (Ser); by autocatalysis).

This sequence belongs to the phosphatidylserine decarboxylase family. PSD-B subfamily. Prokaryotic type I sub-subfamily. In terms of assembly, heterodimer of a large membrane-associated beta subunit and a small pyruvoyl-containing alpha subunit. It depends on pyruvate as a cofactor. Post-translationally, is synthesized initially as an inactive proenzyme. Formation of the active enzyme involves a self-maturation process in which the active site pyruvoyl group is generated from an internal serine residue via an autocatalytic post-translational modification. Two non-identical subunits are generated from the proenzyme in this reaction, and the pyruvate is formed at the N-terminus of the alpha chain, which is derived from the carboxyl end of the proenzyme. The autoendoproteolytic cleavage occurs by a canonical serine protease mechanism, in which the side chain hydroxyl group of the serine supplies its oxygen atom to form the C-terminus of the beta chain, while the remainder of the serine residue undergoes an oxidative deamination to produce ammonia and the pyruvoyl prosthetic group on the alpha chain. During this reaction, the Ser that is part of the protease active site of the proenzyme becomes the pyruvoyl prosthetic group, which constitutes an essential element of the active site of the mature decarboxylase.

It localises to the cell membrane. It carries out the reaction a 1,2-diacyl-sn-glycero-3-phospho-L-serine + H(+) = a 1,2-diacyl-sn-glycero-3-phosphoethanolamine + CO2. It functions in the pathway phospholipid metabolism; phosphatidylethanolamine biosynthesis; phosphatidylethanolamine from CDP-diacylglycerol: step 2/2. Its function is as follows. Catalyzes the formation of phosphatidylethanolamine (PtdEtn) from phosphatidylserine (PtdSer). This is Phosphatidylserine decarboxylase proenzyme from Vibrio campbellii (strain ATCC BAA-1116).